Here is a 711-residue protein sequence, read N- to C-terminus: Myb-like protein B (711 aa).

A compositionally biased stretch (low complexity) spans 24-50; it reads QPQQSIQQQQQQQQQQQQQQQQQQQQQ. Disordered regions lie at residues 24–70 and 113–235; these read QPQQ…SPQL and NYHT…IINN. Polar residues-rich tracts occupy residues 113–139 and 148–157; these read NYHT…SPPT and TPLSSSTGFS. Composition is skewed to low complexity over residues 158–187 and 198–235; these read NNNN…NNNI and NNYP…IINN. HTH myb-type domains follow at residues 428–490 and 491–542; these read RESI…SPEI and KKGS…SRQT. 2 DNA-binding regions (H-T-H motif) span residues 462-486 and 514-538; these read WKKI…KRVL and WKNV…KAIM. The Myb-like domain maps to 540–598; the sequence is RQTEWNQLEDDILTKKIKLMTQNNEKISFQQVSKHLARAKTTKIPRTALECKSRWSQLN. The tract at residues 598-640 is disordered; it reads NSTNVNNNNNNNNNSITTSSSNTNQQQQSTMVTPTSSPLSSPI.

It is found in the nucleus. Its function is as follows. Transcriptional activator that initiates multicellular development by induction of adenylyl cyclase expression. The sequence is that of Myb-like protein B (mybB) from Dictyostelium discoideum (Social amoeba).